The sequence spans 523 residues: Apoptosis inhibitor 5-B (523 aa).

An ARM-like and Heat-like helical repeats region spans residues 1-360; it reads MPTVEELYRN…HQLGRKLPDF (360 aa). Residues 446–523 form a disordered region; that stretch reads VQKTDSGQKR…RGNRSRGRIY (78 aa). The Nuclear localization signal signature appears at 454-475; it reads KRMSDETSSTSPPKKPVVGPKR. A compositionally biased stretch (gly residues) spans 502–515; that stretch reads GFQGGRGRGWGGRG.

This sequence belongs to the API5 family. Monomer.

Its subcellular location is the nucleus. Functionally, may be an antiapoptotic factor. The chain is Apoptosis inhibitor 5-B (api5-b) from Xenopus laevis (African clawed frog).